The chain runs to 65 residues: U11-theraphotoxin-Cg1b (65 aa).

The N-terminal stretch at 1-21 (MKTTILVVILGLTLLFALSAA) is a signal peptide. Residues 22 to 29 (TELKDEER) constitute a propeptide that is removed on maturation. Disulfide bonds link C31–C45, C38–C50, and C44–C57.

This sequence belongs to the neurotoxin 10 (Hwtx-1) family. 32 (Jztx-16) subfamily. Expressed by the venom gland.

It localises to the secreted. Functionally, probable ion channel inhibitor. The chain is U11-theraphotoxin-Cg1b from Chilobrachys guangxiensis (Chinese earth tiger tarantula).